The sequence spans 288 residues: ATP synthase gamma chain (288 aa).

The protein belongs to the ATPase gamma chain family. As to quaternary structure, F-type ATPases have 2 components, CF(1) - the catalytic core - and CF(0) - the membrane proton channel. CF(1) has five subunits: alpha(3), beta(3), gamma(1), delta(1), epsilon(1). CF(0) has three main subunits: a, b and c.

The protein localises to the cell inner membrane. In terms of biological role, produces ATP from ADP in the presence of a proton gradient across the membrane. The gamma chain is believed to be important in regulating ATPase activity and the flow of protons through the CF(0) complex. This is ATP synthase gamma chain from Stutzerimonas stutzeri (strain A1501) (Pseudomonas stutzeri).